We begin with the raw amino-acid sequence, 384 residues long: MTGTPPPSRFPEQPIPPWRRAVLKVGSSLLAAAGGGLSPRFALDLAHFVSANITAGRQLVIVSSGAVAAGRALIPPLPESGGALAARQALAALGQAQLIALWQRFFDRPVAQVLLTHDDLRNRRRYLNARATLRELLHLGTLPVVNENDTVSVDELKLGDNDNLAAIVAALIDAQALFIATDIDGLYTTDPRHHPDAQPLHEVRTLTPEHLAMAGDSSSTVGTGGMRTKLEAALKAGAAGIDTYLFNGRSSDVVRGLAQHRLRGTRIHPTCTPIAARKYWLRHAPVEPGAILIDAGAAAALAQQGASLLPGGVLSAEGDFRRGDMIQIATRSPDHPPHPLARGLVQYSAADVRRIAGCHSRDIQPLLGYTYGDTIVHRDDLVLL.

K24 serves as a coordination point for ATP. S64, D149, and N161 together coordinate substrate. ATP contacts are provided by residues T181–D182 and T223–K229. The PUA domain maps to P288–T370.

It belongs to the glutamate 5-kinase family.

Its subcellular location is the cytoplasm. The catalysed reaction is L-glutamate + ATP = L-glutamyl 5-phosphate + ADP. It functions in the pathway amino-acid biosynthesis; L-proline biosynthesis; L-glutamate 5-semialdehyde from L-glutamate: step 1/2. In terms of biological role, catalyzes the transfer of a phosphate group to glutamate to form L-glutamate 5-phosphate. The protein is Glutamate 5-kinase of Xylella fastidiosa (strain 9a5c).